Here is a 138-residue protein sequence, read N- to C-terminus: MKITRFGVSVPDELLEKFDRIIEEKGYVNRSEAIRDLMRDFIVRHEWEEGDREVAGTITIVYNHDEADVVKELLELQHDYVDEIVSSLHVHMDEHNCLEVVVVKGKAGRIKEIAERLISLKGVKHGKLVMTTTGRELV.

Ni(2+) contacts are provided by His78, His89, His91, and Cys97.

This sequence belongs to the transcriptional regulatory CopG/NikR family. Ni(2+) serves as cofactor.

In terms of biological role, transcriptional regulator. The chain is Putative nickel-responsive regulator from Thermococcus onnurineus (strain NA1).